The sequence spans 469 residues: MSHDVITRFAPSPTGHLHLGGARTALFNWLYAKHNNGKFLLRIEDTDKKRSSQELIDSIINAMSWLKIHYDGKAVLQSENISRHVEIANQLMLNNKAYYCYCSEEEINKEKEESAKKGLYYKHNCIWKNKSAPNSNITRVVRLKSPTDGVTSFDDEVYGNITVNNSQLDDMILLRSDNTPTYLLSVVVDDHDMNISHIIRGTDHLTNTARQLLIYNALEWDPPKFAHIPLIHDENGNKLSKRHQAIGIHEYKNSGILPEAIFNYLLRMGWSHENDEVITIDQAIRWFSIEGIGQSPSRLDSKKLEFLNNHYINITDNETILNMIIPIIEEKTGHIITDVKKGYLLKGLSELKKRTKNLVNLAKESLFYVEDIPISIDQESITVIKDYKHIFSILYDNLSKISEKDWNHNILMSIIKDISCNLEVKISIVYHCLRASITGRMNAPSIIEIMINLQHKECLQRIKYALDVI.

A 'HIGH' region motif is present at residues 11–21; that stretch reads PSPTGHLHLGG. The short motif at 238-242 is the 'KMSKS' region element; it reads KLSKR. Lysine 241 provides a ligand contact to ATP.

Belongs to the class-I aminoacyl-tRNA synthetase family. Glutamate--tRNA ligase type 1 subfamily. Monomer.

It localises to the cytoplasm. It catalyses the reaction tRNA(Glu) + L-glutamate + ATP = L-glutamyl-tRNA(Glu) + AMP + diphosphate. In terms of biological role, catalyzes the attachment of glutamate to tRNA(Glu) in a two-step reaction: glutamate is first activated by ATP to form Glu-AMP and then transferred to the acceptor end of tRNA(Glu). The sequence is that of Glutamate--tRNA ligase 1 from Ehrlichia canis (strain Jake).